The primary structure comprises 607 residues: Matrix metalloproteinase-16 (607 aa).

Positions 1-31 (MILLAFSSGRRLDFVHRSGVFFLQTLLWILC) are cleaved as a signal peptide. A propeptide spanning residues 32 to 119 (ATVCGTEQYF…SSKFNIRRKR (88 aa)) is cleaved from the precursor. N-linked (GlcNAc...) asparagine glycosylation is present at Asn83. Positions 99 to 106 (PRCGVPDQ) match the Cysteine switch motif. Cys101 contacts Zn(2+). Topologically, residues 120 to 564 (YALTGQKWQH…LDNTASTVKA (445 aa)) are extracellular. A Ca(2+)-binding site is contributed by Asp183. The Zn(2+) site is built by His193 and Asp195. Residues Asp200, Gly201, Gly203, and Phe205 each contribute to the Ca(2+) site. Position 208 (His208) interacts with Zn(2+). Ca(2+)-binding residues include Gly215, Gly217, and Asp219. His221 provides a ligand contact to Zn(2+). The Ca(2+) site is built by Asp223 and Glu226. His246 serves as a coordination point for Zn(2+). Glu247 is a catalytic residue. Positions 250 and 256 each coordinate Zn(2+). The tract at residues 281 to 340 (DDLQGIQKIYGPPDKIPPPTRPLPTVPPHRSVPPADPRRHDRPKPPRPPTGRPSYPGAKP) is disordered. Pro residues predominate over residues 294-315 (DKIPPPTRPLPTVPPHRSVPPA). Hemopexin repeat units follow at residues 340–388 (PNIC…WRGL), 389–434 (PPSI…GNGI), 436–484 (PHGI…KGIP), and 485–532 (ESPQ…FMGC). The cysteines at positions 343 and 532 are disulfide-linked. The helical transmembrane segment at 565-585 (IAIVIPCILALCLLVLVYTVF) threads the bilayer. The Cytoplasmic segment spans residues 586–607 (QFKRKGTPRHILYCKRSMQEWV).

The protein belongs to the peptidase M10A family. In terms of assembly, interacts with CSPG4 through CSPG4 chondroitin sulfate glycosaminoglycan. Zn(2+) is required as a cofactor. The cofactor is Ca(2+). Post-translationally, the precursor is cleaved by a furin endopeptidase.

It is found in the cell membrane. Functionally, endopeptidase that degrades various components of the extracellular matrix, such as collagen type III and fibronectin. Activates progelatinase A. Involved in the matrix remodeling of blood vessels. It has no effect on type I, II, IV and V collagen. However, upon interaction with CSPG4, it may be involved in degradation and invasion of type I collagen by melanoma cells. In Mus musculus (Mouse), this protein is Matrix metalloproteinase-16 (Mmp16).